We begin with the raw amino-acid sequence, 824 residues long: Phenylalanine--tRNA ligase beta subunit (824 aa).

Positions 39-153 constitute a tRNA-binding domain; sequence SEQAKNVVIG…NIPPIGSNAV (115 aa). Positions 414–507 constitute a B5 domain; that stretch reads KKSISVNLRM…RLIGYDNFDS (94 aa). 4 residues coordinate Mg(2+): aspartate 485, aspartate 491, glutamate 494, and glutamate 495. Residues 730 to 823 enclose the FDX-ACB domain; sequence PTVPYMERDI…LKEKIKAELR (94 aa).

Belongs to the phenylalanyl-tRNA synthetase beta subunit family. Type 1 subfamily. Tetramer of two alpha and two beta subunits. The cofactor is Mg(2+).

It localises to the cytoplasm. It carries out the reaction tRNA(Phe) + L-phenylalanine + ATP = L-phenylalanyl-tRNA(Phe) + AMP + diphosphate + H(+). This Prochlorococcus marinus (strain NATL2A) protein is Phenylalanine--tRNA ligase beta subunit.